A 248-amino-acid polypeptide reads, in one-letter code: ATP synthase subunit a, chloroplastic (248 aa).

A run of 5 helical transmembrane segments spans residues 37–57, 96–116, 135–155, 200–220, and 221–241; these read AQVL…AFVT, VPFI…GALF, INTT…AGLH, LVVA…MMFL, and GLFT…AYIG.

The protein belongs to the ATPase A chain family. As to quaternary structure, F-type ATPases have 2 components, CF(1) - the catalytic core - and CF(0) - the membrane proton channel. CF(1) has five subunits: alpha(3), beta(3), gamma(1), delta(1), epsilon(1). CF(0) has four main subunits: a, b, b' and c.

It is found in the plastid. Its subcellular location is the chloroplast thylakoid membrane. In terms of biological role, key component of the proton channel; it plays a direct role in the translocation of protons across the membrane. The protein is ATP synthase subunit a, chloroplastic of Psilotum nudum (Whisk fern).